A 213-amino-acid chain; its full sequence is Large ribosomal subunit protein uL3 (213 aa).

This sequence belongs to the universal ribosomal protein uL3 family. In terms of assembly, part of the 50S ribosomal subunit. Forms a cluster with proteins L14 and L19.

One of the primary rRNA binding proteins, it binds directly near the 3'-end of the 23S rRNA, where it nucleates assembly of the 50S subunit. The polypeptide is Large ribosomal subunit protein uL3 (Desulforudis audaxviator (strain MP104C)).